The sequence spans 321 residues: Fructose-1,6-bisphosphatase 2 class 2 (321 aa).

Asp-32, Glu-56, Asp-84, and Glu-87 together coordinate Mn(2+). Substrate-binding positions include Glu-87–Thr-89, Tyr-118, Lys-163–Arg-165, Asp-185–Asp-187, and Gly-209. Glu-212 provides a ligand contact to Mn(2+).

This sequence belongs to the FBPase class 2 family. In terms of assembly, homodimer. Mn(2+) is required as a cofactor.

It carries out the reaction beta-D-fructose 1,6-bisphosphate + H2O = beta-D-fructose 6-phosphate + phosphate. Competitively inhibited by low concentrations of phosphate (IC50 of 1.2 mM) and is also sensitive to Li(+) (IC50 of 15.8 mM). Also inhibited by 1 mM ATP or 50 mM KCl (60% and 20% residual activity, respectively). Slightly activated (40-50%) by the addition of 1 mM dithiothreitol in vitro. In terms of biological role, catalyzes the hydrolysis of fructose 1,6-bisphosphate to fructose 6-phosphate. Also displays a low activity toward glucose 1,6-bisphosphate, and no activity against ribulose 1,5-bisphosphate, fructose 2,6-bisphosphate, or fructose 1-phosphate. The chain is Fructose-1,6-bisphosphatase 2 class 2 (yggF) from Escherichia coli (strain K12).